A 434-amino-acid chain; its full sequence is Alpha-enolase (434 aa).

An N-acetylserine modification is found at Ser2. The residue at position 5 (Lys5) is an N6-acetyllysine. Ser27 bears the Phosphoserine mark. Position 40 (Ser40) interacts with Mg(2+). Tyr44 carries the phosphotyrosine modification. Lys60 carries the N6-acetyllysine; alternate modification. An N6-succinyllysine; alternate modification is found at Lys60. An N6-acetyllysine mark is found at Lys64 and Lys71. Position 89 is an N6-acetyllysine; alternate (Lys89). N6-succinyllysine; alternate is present on Lys89. An N6-acetyllysine mark is found at Lys92 and Lys126. Residues His158 and Glu167 each coordinate substrate. Lys193 and Lys199 each carry N6-acetyllysine. The residue at position 202 (Lys202) is an N6-acetyllysine; alternate. Lys202 participates in a covalent cross-link: Glycyl lysine isopeptide (Lys-Gly) (interchain with G-Cter in SUMO2); alternate. Glu210 functions as the Proton donor in the catalytic mechanism. Residues Lys228 and Lys233 each carry the N6-acetyllysine; alternate modification. N6-succinyllysine; alternate is present on Lys228. Position 228 is an N6-(2-hydroxyisobutyryl)lysine; alternate (Lys228). The residue at position 233 (Lys233) is an N6-malonyllysine; alternate. Asp245 contacts Mg(2+). Position 254 is a phosphoserine (Ser254). Residue Lys256 is modified to N6-acetyllysine. 2 positions are modified to phosphoserine: Ser263 and Ser272. Lys281 carries the N6-acetyllysine; alternate modification. Lys281 carries the N6-(2-hydroxyisobutyryl)lysine; alternate modification. Lys285 carries the N6-acetyllysine modification. Phosphotyrosine is present on Tyr287. Ser291 is modified (phosphoserine). Residues Glu293 and Asp318 each contribute to the Mg(2+) site. Substrate is bound by residues Glu293 and Asp318. N6-acetyllysine is present on residues Lys335 and Lys343. Catalysis depends on Lys343, which acts as the Proton acceptor. Residues 370–373 and Lys394 each bind substrate; that span reads SHRS. The tract at residues 405-434 is required for interaction with PLG; sequence AKYNQLLRIEEELGSKAKFAGRNFRNPLAK. At Lys406 the chain carries N6-acetyllysine. Position 420 is an N6-acetyllysine; alternate (Lys420). Residue Lys420 is modified to N6-succinyllysine; alternate. The residue at position 420 (Lys420) is an N6-malonyllysine; alternate.

It belongs to the enolase family. Mammalian enolase is composed of 3 isozyme subunits, alpha, beta and gamma, which can form homodimers or heterodimers which are cell-type and development-specific. ENO1 interacts with PLG in the neuronal plasma membrane and promotes its activation. The C-terminal lysine is required for this binding. Interacts with ENO4 and PGAM2. Interacts with CMTM6. Mg(2+) serves as cofactor. In terms of processing, ISGylated. Lysine 2-hydroxyisobutyrylation (Khib) by p300/EP300 activates the phosphopyruvate hydratase activity.

It is found in the cytoplasm. The protein localises to the cell membrane. It carries out the reaction (2R)-2-phosphoglycerate = phosphoenolpyruvate + H2O. It functions in the pathway carbohydrate degradation; glycolysis; pyruvate from D-glyceraldehyde 3-phosphate: step 4/5. In terms of biological role, glycolytic enzyme the catalyzes the conversion of 2-phosphoglycerate to phosphoenolpyruvate. In addition to glycolysis, involved in various processes such as growth control, hypoxia tolerance and allergic responses. May also function in the intravascular and pericellular fibrinolytic system due to its ability to serve as a receptor and activator of plasminogen on the cell surface of several cell-types such as leukocytes and neurons. Stimulates immunoglobulin production. This chain is Alpha-enolase (ENO1), found in Macaca fascicularis (Crab-eating macaque).